A 963-amino-acid polypeptide reads, in one-letter code: Phosphoenolpyruvate carboxylase 2 (963 aa).

Phosphoserine is present on Ser-11. Catalysis depends on residues His-172 and Lys-599. At Ser-701 the chain carries Phosphoserine.

This sequence belongs to the PEPCase type 1 family. As to quaternary structure, homotetramer. Mg(2+) serves as cofactor. In terms of tissue distribution, expressed in all plant organs, with higher levels in stems and leaves.

It localises to the cytoplasm. It catalyses the reaction oxaloacetate + phosphate = phosphoenolpyruvate + hydrogencarbonate. With respect to regulation, by light-reversible phosphorylation. Through the carboxylation of phosphoenolpyruvate (PEP) it forms oxaloacetate, a four-carbon dicarboxylic acid source for the tricarboxylic acid cycle. The protein is Phosphoenolpyruvate carboxylase 2 (PPC2) of Arabidopsis thaliana (Mouse-ear cress).